The primary structure comprises 368 residues: Chaperone protein DnaJ (368 aa).

Positions 5-69 (DYYEVLGVAR…NQRARYDQFG (65 aa)) constitute a J domain. The CR-type zinc finger occupies 125-207 (GVEKVITIPV…CRGAGRVRKN (83 aa)). C138, C141, C155, C158, C181, C184, C195, and C198 together coordinate Zn(2+). CXXCXGXG motif repeat units lie at residues 138–145 (CGTCHGSG), 155–162 (CKRCGGSG), 181–188 (CSTCHGRG), and 195–202 (CETCRGAG).

It belongs to the DnaJ family. In terms of assembly, homodimer. Zn(2+) serves as cofactor.

Its subcellular location is the cytoplasm. Participates actively in the response to hyperosmotic and heat shock by preventing the aggregation of stress-denatured proteins and by disaggregating proteins, also in an autonomous, DnaK-independent fashion. Unfolded proteins bind initially to DnaJ; upon interaction with the DnaJ-bound protein, DnaK hydrolyzes its bound ATP, resulting in the formation of a stable complex. GrpE releases ADP from DnaK; ATP binding to DnaK triggers the release of the substrate protein, thus completing the reaction cycle. Several rounds of ATP-dependent interactions between DnaJ, DnaK and GrpE are required for fully efficient folding. Also involved, together with DnaK and GrpE, in the DNA replication of plasmids through activation of initiation proteins. The chain is Chaperone protein DnaJ from Exiguobacterium sibiricum (strain DSM 17290 / CCUG 55495 / CIP 109462 / JCM 13490 / 255-15).